The following is a 44-amino-acid chain: Omega-plectoxin-Pt1a (44 aa).

Cystine bridges form between Cys3–Cys17, Cys10–Cys23, Cys16–Cys35, Cys20–Cys42, and Cys25–Cys33. Thr44 is subject to Threonine amide. Thr44 is lipidated: O-palmitoyl threonine.

Belongs to the neurotoxin 02 (plectoxin) family. 02 (plectoxin) subfamily. Contains 5 disulfide bonds. Post-translationally, acylation by palmitate is required for biological activity. Expressed by the venom gland.

It is found in the secreted. Toxin that inhibits presynaptic voltage-gated calcium channel (Cav) in Drosophila nerve terminals, most likely through specific block of the Cav2 channel (known as Dmca1A). The chain is Omega-plectoxin-Pt1a from Plectreurys tristis (Spider).